The chain runs to 340 residues: DNA repair protein RAD51 homolog A (340 aa).

The segment covering 1–14 (MSSAAQQQQKAAAA) has biased composition (low complexity). The disordered stretch occupies residues 1–21 (MSSAAQQQQKAAAAEQEEVEH). The HhH domain maps to 49–78 (TVEAVAYTPRKDLLQIKGISEAKADKIIEA). 128–135 (GEFRSGKT) provides a ligand contact to ATP.

This sequence belongs to the RecA family. RAD51 subfamily. As to quaternary structure, self-associates and may interact with XRCC3 homolog. In terms of tissue distribution, highly expressed in mitotic and meiotic tissues, but low levels in differentiated tissues.

It is found in the nucleus. Binds to single and double-stranded DNA and exhibits DNA-dependent ATPase activity. Unwinds duplex DNA. Component of the meiotic recombination pathway. Seems to play a role in mediating chromosome homology search, chromosome pairing and synapsis at early stages and probably chromosome crossing-over at later stages in meiosis. Probably is involved in the repair of meiotic double strand breaks (DBSs) and in homologous recombination. The protein is DNA repair protein RAD51 homolog A (RAD51A) of Zea mays (Maize).